The following is a 119-amino-acid chain: Ribosome-binding factor A (119 aa).

This sequence belongs to the RbfA family. As to quaternary structure, monomer. Binds 30S ribosomal subunits, but not 50S ribosomal subunits or 70S ribosomes.

The protein localises to the cytoplasm. One of several proteins that assist in the late maturation steps of the functional core of the 30S ribosomal subunit. Associates with free 30S ribosomal subunits (but not with 30S subunits that are part of 70S ribosomes or polysomes). Required for efficient processing of 16S rRNA. May interact with the 5'-terminal helix region of 16S rRNA. The polypeptide is Ribosome-binding factor A (Pseudothermotoga lettingae (strain ATCC BAA-301 / DSM 14385 / NBRC 107922 / TMO) (Thermotoga lettingae)).